Consider the following 320-residue polypeptide: Malate dehydrogenase (320 aa).

Residues 10 to 15 and D34 each bind NAD(+); that span reads GSGMIG. Residues R83 and R89 each contribute to the substrate site. NAD(+) contacts are provided by residues N96 and 119–121; that span reads ITN. Residues N121 and R152 each coordinate substrate. Residue H176 is the Proton acceptor of the active site.

Belongs to the LDH/MDH superfamily. MDH type 3 family.

The enzyme catalyses (S)-malate + NAD(+) = oxaloacetate + NADH + H(+). Its function is as follows. Catalyzes the reversible oxidation of malate to oxaloacetate. The protein is Malate dehydrogenase of Allorhizobium ampelinum (strain ATCC BAA-846 / DSM 112012 / S4) (Agrobacterium vitis (strain S4)).